The primary structure comprises 128 residues: Glycine cleavage system H protein (128 aa).

Residues 24-106 (VFCVGITDHA…YDEGWLFRIR (83 aa)) form the Lipoyl-binding domain. N6-lipoyllysine is present on lysine 65.

The protein belongs to the GcvH family. The glycine cleavage system is composed of four proteins: P, T, L and H. (R)-lipoate is required as a cofactor.

Functionally, the glycine cleavage system catalyzes the degradation of glycine. The H protein shuttles the methylamine group of glycine from the P protein to the T protein. This chain is Glycine cleavage system H protein, found in Edwardsiella ictaluri (strain 93-146).